The sequence spans 197 residues: Small ribosomal subunit protein eS1 (197 aa).

This sequence belongs to the eukaryotic ribosomal protein eS1 family.

The polypeptide is Small ribosomal subunit protein eS1 (Methanoculleus marisnigri (strain ATCC 35101 / DSM 1498 / JR1)).